Reading from the N-terminus, the 321-residue chain is Ribose-phosphate pyrophosphokinase (321 aa).

Residues Asp44 to Glu46 and Arg103 to Gln104 contribute to the ATP site. Positions 137 and 179 each coordinate Mg(2+). Lys202 is a catalytic residue. D-ribose 5-phosphate-binding positions include Arg204, Asp228, and Asp232–Thr236.

The protein belongs to the ribose-phosphate pyrophosphokinase family. Class I subfamily. Homohexamer. Requires Mg(2+) as cofactor.

Its subcellular location is the cytoplasm. The enzyme catalyses D-ribose 5-phosphate + ATP = 5-phospho-alpha-D-ribose 1-diphosphate + AMP + H(+). It functions in the pathway metabolic intermediate biosynthesis; 5-phospho-alpha-D-ribose 1-diphosphate biosynthesis; 5-phospho-alpha-D-ribose 1-diphosphate from D-ribose 5-phosphate (route I): step 1/1. Involved in the biosynthesis of the central metabolite phospho-alpha-D-ribosyl-1-pyrophosphate (PRPP) via the transfer of pyrophosphoryl group from ATP to 1-hydroxyl of ribose-5-phosphate (Rib-5-P). This Staphylococcus aureus (strain COL) protein is Ribose-phosphate pyrophosphokinase.